We begin with the raw amino-acid sequence, 183 residues long: Putative 3-methyladenine DNA glycosylase (183 aa).

It belongs to the DNA glycosylase MPG family.

The sequence is that of Putative 3-methyladenine DNA glycosylase from Rickettsia africae (strain ESF-5).